The sequence spans 69 residues: Conopeptide Y-Fe1 (69 aa).

Positions 1 to 20 (MSKLGVVLFVFLLLLPLAAP) are cleaved as a signal peptide. The propeptide occupies 21–69 (QPVGDQPADQPADRNAEARGTYLYPFSYYRLWRYFTRFLHKQPYYYVHI).

The protein belongs to the conotoxin M superfamily. Conopeptide Y family. Expressed by the venom duct.

Its subcellular location is the secreted. Functionally, tyrosine-rich conopeptide that specifically targets voltage-gated potassium channel Kv1.6/KCNA6 (IC(50) is 8.8 uM) that is expressed in Xenopus oocytes. In vivo, causes seizures (at 5 nmol) and death (20 nmol) when intracranially injected into mice, and causes paralysis (at 10 pmol) to C.elegans. The polypeptide is Conopeptide Y-Fe1 (Conus ferrugineus (Cone snail)).